The sequence spans 488 residues: Germacrene A acid 8-beta-hydroxylase (488 aa).

A helical; Signal-anchor for type II membrane protein transmembrane segment spans residues 2-22 (ELFTIFSIVVSSLILFTFWSL). A glycan (N-linked (GlcNAc...) asparagine) is linked at Asn-407. Cys-429 contacts heme.

Belongs to the cytochrome P450 family. Heme serves as cofactor. In terms of tissue distribution, expressed in leaf primordia.

It localises to the membrane. It carries out the reaction germacra-1(10),4,11(13)-trien-12-oate + reduced [NADPH--hemoprotein reductase] + O2 = 8beta-hydroxygermacra-1(10),4,11(13)-trien-12-oate + oxidized [NADPH--hemoprotein reductase] + H2O + H(+). The protein operates within secondary metabolite biosynthesis; terpenoid biosynthesis. Involved in the biosynthesis of germacrene-derived sesquiterpene lactones. Hydroxylates germacrene A acid to 8-beta-hydroxy-germacrene A acid. Unlike 6-alpha-hydroxy-germacrene A acid, this compound cannot undergo spontaneous lactonization. In Helianthus annuus (Common sunflower), this protein is Germacrene A acid 8-beta-hydroxylase.